Reading from the N-terminus, the 138-residue chain is Large ribosomal subunit protein uL16 (138 aa).

Over residues Met1 to Gln13 the composition is skewed to basic residues. The segment at Met1–Leu20 is disordered.

Belongs to the universal ribosomal protein uL16 family. In terms of assembly, part of the 50S ribosomal subunit.

Its function is as follows. Binds 23S rRNA and is also seen to make contacts with the A and possibly P site tRNAs. The sequence is that of Large ribosomal subunit protein uL16 from Bordetella avium (strain 197N).